An 812-amino-acid chain; its full sequence is Chromosome alignment-maintaining phosphoprotein 1 (812 aa).

M1 is modified (N-acetylmethionine). A compositionally biased stretch (basic and acidic residues) spans 86-105 (ASPDKWNDKPKNQLNKETDP). Disordered stretches follow at residues 86-124 (ASPD…SAEP) and 136-546 (KLGS…PEAR). Phosphoserine occurs at positions 87, 108, 173, 184, 204, 214, and 217. Residues 202-213 (VPSPEPQKPAPV) show a composition bias toward pro residues. The span at 220-233 (ATLSNPKPQKQSHF) shows a compositional bias: polar residues. S244, S247, S253, S264, S275, S282, S286, S297, S308, S319, S344, S355, S376, S382, and S386 each carry phosphoserine. Positions 271-490 (ARTTSPEPRK…KSSFFIEPQK (220 aa)) are mediates interaction with MAD2L2. The segment covering 284-297 (SESPEPWKPFPAVS) has biased composition (pro residues). Over residues 336-361 (PAKPAPSVSPGPWKPIPSVSPGPWKP) the composition is skewed to pro residues. The span at 363 to 392 (PSVSSASWKSSSVSPSSWKSPPASPESWKS) shows a compositional bias: low complexity. A Phosphothreonine modification is found at T403. Residues S405, S416, S427, S432, S436, S443, S445, and S452 each carry the phosphoserine modification. The mediates localization to the spindle and the kinetochore and is required for the attachment of spindle microtubules to the kinetochore stretch occupies residues 451-590 (LSPDQRKTSP…ELQIDAIDDQ (140 aa)). T458 carries the phosphothreonine modification. Phosphoserine occurs at positions 459, 462, 472, and 476. K490 carries the post-translational modification N6-acetyllysine; alternate. A Glycyl lysine isopeptide (Lys-Gly) (interchain with G-Cter in SUMO2); alternate cross-link involves residue K490. The segment covering 499–512 (PGPSGPSESPKAAS) has biased composition (low complexity). 3 positions are modified to phosphoserine: S507, S512, and S542. Residue K565 forms a Glycyl lysine isopeptide (Lys-Gly) (interchain with G-Cter in SUMO2) linkage. Residues S572 and S603 each carry the phosphoserine modification. The interval 591 to 812 (KCDILVQEEL…LEPPLEEQQI (222 aa)) is mediates localization to the chromosome and the spindle and negatively regulates chromosome alignment. K606 is covalently cross-linked (Glycyl lysine isopeptide (Lys-Gly) (interchain with G-Cter in SUMO2)). Phosphoserine occurs at positions 615, 626, 627, and 632. A Glycyl lysine isopeptide (Lys-Gly) (interchain with G-Cter in SUMO2) cross-link involves residue K638. Phosphoserine occurs at positions 651, 652, and 653. A Glycyl lysine isopeptide (Lys-Gly) (interchain with G-Cter in SUMO2) cross-link involves residue K670. S675 carries the post-translational modification Phosphoserine. Residue K689 forms a Glycyl lysine isopeptide (Lys-Gly) (interchain with G-Cter in SUMO2) linkage. S736 is modified (phosphoserine). Residues 738 to 760 (YKCTICGKAFLLESLLKNHVAAH) form a C2H2-type zinc finger.

As to quaternary structure, interacts with MAD2L2. Interacts with POGZ, CBX1, CBX3 and CBX5. Phosphorylated by CDK1. Mitotic phosphorylation is required for the attachment of spindle microtubules to the kinetochore.

The protein resides in the nucleus. Its subcellular location is the chromosome. It is found in the centromere. The protein localises to the kinetochore. It localises to the cytoplasm. The protein resides in the cytoskeleton. Its subcellular location is the spindle. In terms of biological role, required for proper alignment of chromosomes at metaphase and their accurate segregation during mitosis. Involved in the maintenance of spindle microtubules attachment to the kinetochore during sister chromatid biorientation. May recruit CENPE and CENPF to the kinetochore. This chain is Chromosome alignment-maintaining phosphoprotein 1 (CHAMP1), found in Homo sapiens (Human).